The chain runs to 339 residues: Fe-S cluster assembly protein DRE2 (339 aa).

An N-terminal SAM-like domain region spans residues 1 to 157; it reads MTRILLLLHP…KKLSSTHAAV (157 aa). Positions 158–206 are linker; the sequence is GLTDTSASNTDEENDDVNSKRKLQETKLAYFSESDDEDEEDQIIDENNL. Residues Cys221, Cys233, Cys236, and Cys238 each coordinate [2Fe-2S] cluster. A fe-S binding site A region spans residues 221 to 238; the sequence is CELPNGKKRRKACKDCTC. Residues Cys302, Cys305, Cys313, and Cys316 each coordinate [4Fe-4S] cluster. Short sequence motifs (cx2C motif) lie at residues 302-305 and 313-316; these read CSSC and CDGC. The fe-S binding site B stretch occupies residues 302-316; that stretch reads CSSCSLGDAFRCDGC.

Belongs to the anamorsin family. As to quaternary structure, monomer. Interacts with TAH18. Interacts with MIA40. The cofactor is [2Fe-2S] cluster. [4Fe-4S] cluster is required as a cofactor.

It localises to the cytoplasm. The protein resides in the mitochondrion intermembrane space. Functionally, component of the cytosolic iron-sulfur (Fe-S) protein assembly (CIA) machinery required for the maturation of extramitochondrial Fe-S proteins. Part of an electron transfer chain functioning in an early step of cytosolic Fe-S biogenesis, facilitating the de novo assembly of a [4Fe-4S] cluster on the scaffold complex CFD1-NBP35. Electrons are transferred to DRE2 from NADPH via the FAD- and FMN-containing protein TAH18. TAH18-DRE2 are also required for the assembly of the diferric tyrosyl radical cofactor of ribonucleotide reductase (RNR), probably by providing electrons for reduction during radical cofactor maturation in the catalytic small subunit RNR2. This chain is Fe-S cluster assembly protein DRE2, found in Debaryomyces hansenii (strain ATCC 36239 / CBS 767 / BCRC 21394 / JCM 1990 / NBRC 0083 / IGC 2968) (Yeast).